We begin with the raw amino-acid sequence, 181 residues long: Translation initiation factor IF-3 (181 aa).

This sequence belongs to the IF-3 family. As to quaternary structure, monomer.

The protein resides in the cytoplasm. Its function is as follows. IF-3 binds to the 30S ribosomal subunit and shifts the equilibrium between 70S ribosomes and their 50S and 30S subunits in favor of the free subunits, thus enhancing the availability of 30S subunits on which protein synthesis initiation begins. The chain is Translation initiation factor IF-3 from Idiomarina loihiensis (strain ATCC BAA-735 / DSM 15497 / L2-TR).